Here is an 812-residue protein sequence, read N- to C-terminus: ATP-dependent zinc metalloprotease FtsH (812 aa).

Residues 1 to 21 (MPPSPPRPPKFPGSGRPESPN) are Cytoplasmic-facing. A helical membrane pass occupies residues 22 to 42 (WGVWVMVLLIVGVLAFGFFTP). The Extracellular segment spans residues 43 to 241 (ESFGLGPRKE…TKFKRESGSW (199 aa)). A helical transmembrane segment spans residues 242 to 262 (GGILLNLLPIVLILVILFFMF). Topologically, residues 263–812 (RAQSGGARGA…EFGKDGGEKK (550 aa)) are cytoplasmic. Residue 333 to 340 (GAPGTGKT) participates in ATP binding. A Zn(2+)-binding site is contributed by His555. Glu556 is a catalytic residue. Residues His559 and Asp631 each contribute to the Zn(2+) site. A disordered region spans residues 739-812 (KNPPARVTPP…EFGKDGGEKK (74 aa)). Composition is skewed to basic and acidic residues over residues 757-785 (QPGK…RKME) and 803-812 (EFGKDGGEKK).

This sequence in the central section; belongs to the AAA ATPase family. The protein in the C-terminal section; belongs to the peptidase M41 family. In terms of assembly, homohexamer. The cofactor is Zn(2+).

The protein resides in the cell membrane. Acts as a processive, ATP-dependent zinc metallopeptidase for both cytoplasmic and membrane proteins. Plays a role in the quality control of integral membrane proteins. The sequence is that of ATP-dependent zinc metalloprotease FtsH from Akkermansia muciniphila (strain ATCC BAA-835 / DSM 22959 / JCM 33894 / BCRC 81048 / CCUG 64013 / CIP 107961 / Muc).